The following is a 751-amino-acid chain: Semaphorin-3C (751 aa).

An N-terminal signal peptide occupies residues 1–21 (MAFQAVCILVGVFVCSTYVKG). Residues 28–511 (RVYLTFDELR…SNEGLAQVSL (484 aa)) form the Sema domain. A glycan (N-linked (GlcNAc...) asparagine) is linked at Asn81. An intrachain disulfide couples Cys101 to Cys112. An N-linked (GlcNAc...) asparagine glycan is attached at Asn123. Disulfide bonds link Cys130–Cys139, Cys266–Cys378, and Cys290–Cys338. An N-linked (GlcNAc...) asparagine glycan is attached at Asn268. Asn465 is a glycosylation site (N-linked (GlcNAc...) asparagine). Cys514 and Cys532 form a disulfide bridge. One can recognise an Ig-like C2-type domain in the interval 571 to 655 (AYRNAAEIVQ…TENSFKQTIA (85 aa)). Residues Asn585 and Asn586 are each glycosylated (N-linked (GlcNAc...) asparagine). A disulfide bond links Cys592 and Cys643. The segment covering 712–731 (TRQQHQQGEESQKMRGDYGK) has biased composition (basic and acidic residues). Residues 712 to 751 (TRQQHQQGEESQKMRGDYGKLKALINSRKSRNRRNQLPES) form a disordered region.

The protein belongs to the semaphorin family. As to quaternary structure, interacts with PLXND1.

It is found in the secreted. Its function is as follows. Binds to plexin family members and plays an important role in the regulation of developmental processes. Required for normal cardiovascular development during embryogenesis. Functions as attractant for growing axons, and thereby plays an important role in axon growth and axon guidance. This is Semaphorin-3C (SEMA3C) from Bos taurus (Bovine).